The primary structure comprises 218 residues: Elongation factor Ts (218 aa).

Residues T82–V85 form an involved in Mg(2+) ion dislocation from EF-Tu region.

The protein belongs to the EF-Ts family.

It localises to the cytoplasm. Associates with the EF-Tu.GDP complex and induces the exchange of GDP to GTP. It remains bound to the aminoacyl-tRNA.EF-Tu.GTP complex up to the GTP hydrolysis stage on the ribosome. The protein is Elongation factor Ts (tsf) of Synechocystis sp. (strain ATCC 27184 / PCC 6803 / Kazusa).